A 224-amino-acid polypeptide reads, in one-letter code: Ribosomal RNA small subunit methyltransferase G (224 aa).

S-adenosyl-L-methionine-binding positions include glycine 89, leucine 94, 140 to 141 (IE), and arginine 154.

The protein belongs to the methyltransferase superfamily. RNA methyltransferase RsmG family.

It localises to the cytoplasm. The enzyme catalyses guanosine(527) in 16S rRNA + S-adenosyl-L-methionine = N(7)-methylguanosine(527) in 16S rRNA + S-adenosyl-L-homocysteine. In terms of biological role, specifically methylates the N7 position of guanine in position 527 of 16S rRNA. This chain is Ribosomal RNA small subunit methyltransferase G, found in Bordetella avium (strain 197N).